Consider the following 603-residue polypeptide: NADH-ubiquinone oxidoreductase chain 5 (603 aa).

Transmembrane regions (helical) follow at residues L4 to L24, M38 to G58, L87 to Y107, F117 to L137, L140 to G160, A171 to L191, L211 to L233, T241 to I261, I273 to L293, I301 to N320, T331 to G351, L366 to L386, L409 to F429, L457 to V477, F488 to T508, and M583 to I603.

This sequence belongs to the complex I subunit 5 family.

It is found in the mitochondrion inner membrane. The enzyme catalyses a ubiquinone + NADH + 5 H(+)(in) = a ubiquinol + NAD(+) + 4 H(+)(out). Core subunit of the mitochondrial membrane respiratory chain NADH dehydrogenase (Complex I) that is believed to belong to the minimal assembly required for catalysis. Complex I functions in the transfer of electrons from NADH to the respiratory chain. The immediate electron acceptor for the enzyme is believed to be ubiquinone. The protein is NADH-ubiquinone oxidoreductase chain 5 (MT-ND5) of Dugong dugon (Dugong).